A 49-amino-acid polypeptide reads, in one-letter code: Lectin alpha chain (49 aa).

It belongs to the leguminous lectin family. In terms of assembly, homotetramer. Post-translationally, the beta and gamma chains are produced by partial proteolytic processing of the lectin alpha chain by an asparaginyl endopeptidase. Mixture of 60% alpha lectin and 40% of its beta and gamma proteolytic fragments. As to expression, seed.

Its function is as follows. D-mannose/D-glucose-binding lectin. This Dioclea violacea protein is Lectin alpha chain.